We begin with the raw amino-acid sequence, 121 residues long: MIQQESRLIVTDNSGAKEVLCIRVLGGTRRRYASVGDIIVVTVKTVVPSSDIKKGIVSKAIIVRVKKEIRREDGSYIRFDDNACVLLNSTGEIRGSRIFGPVARELRTVNMKIVSLAPEVL.

The protein belongs to the universal ribosomal protein uL14 family. In terms of assembly, part of the 50S ribosomal subunit. Forms a cluster with proteins L3 and L19. In the 70S ribosome, L14 and L19 interact and together make contacts with the 16S rRNA in bridges B5 and B8.

In terms of biological role, binds to 23S rRNA. Forms part of two intersubunit bridges in the 70S ribosome. The chain is Large ribosomal subunit protein uL14 from Azobacteroides pseudotrichonymphae genomovar. CFP2.